Here is a 413-residue protein sequence, read N- to C-terminus: Divalent metal cation transporter MntH (413 aa).

Over 1–19 the chain is Cytoplasmic; the sequence is MTDNRVENSSGRAARKLRL. The helical transmembrane segment at 20–39 threads the bilayer; that stretch reads ALMGPAFIAAIGYIDPGNFA. At 40–51 the chain is on the periplasmic side; sequence TNIQAGASFGYQ. Residues 52–71 form a helical membrane-spanning segment; that stretch reads LLWVVVWANLMAMLIQILSA. Residues 72 to 95 lie on the Cytoplasmic side of the membrane; the sequence is KLGIATGKNLAEQIRDHYPRPVVW. Residues 96 to 118 traverse the membrane as a helical segment; it reads FYWVQAEIIAMATDLAEFIGAAI. Residues 119–125 are Periplasmic-facing; that stretch reads GFKLILG. The helical transmembrane segment at 126 to 145 threads the bilayer; it reads VSLLQGAVLTGIATFLILML. Over 146 to 155 the chain is Cytoplasmic; it reads QRRGQKPLEK. The helical transmembrane segment at 156–175 threads the bilayer; sequence VIGGLLLFVAAAYIVELFFS. The Periplasmic portion of the chain corresponds to 176–196; that stretch reads QPDMAQLGKGMVIPALPNPEA. Residues 197–220 traverse the membrane as a helical segment; that stretch reads VFLAAGVLGATIMPHVIYLHSSLT. Residues 221–238 lie on the Cytoplasmic side of the membrane; it reads QHLHGGTRQQRYSATKWD. A helical membrane pass occupies residues 239-258; it reads VAIAMTIAGFVNLAMMATAA. Over 259 to 276 the chain is Periplasmic; the sequence is AAFHFSGHTGIADLDQAY. The helical transmembrane segment at 277–297 threads the bilayer; sequence LTLEPLLSHAAATVFGLSLVA. Topologically, residues 298–327 are cytoplasmic; that stretch reads AGLSSTVVGTLAGQVVMQGFVRFHIPLWVR. A helical membrane pass occupies residues 328-344; sequence RTITMLPSFIVILMGLD. Topologically, residues 345 to 350 are periplasmic; that stretch reads PTRILV. A helical transmembrane segment spans residues 351–370; that stretch reads MSQVLLSFGIALALVPLLIF. The Cytoplasmic portion of the chain corresponds to 371 to 387; sequence TSNATLMGELVNTRRVK. The helical transmembrane segment at 388–406 threads the bilayer; the sequence is QVGWIIVVLVVALNIWLLV. At 407–413 the chain is on the periplasmic side; sequence GTVMGLS.

The protein belongs to the NRAMP family.

It localises to the cell inner membrane. Its function is as follows. H(+)-stimulated, divalent metal cation uptake system. This chain is Divalent metal cation transporter MntH, found in Salmonella paratyphi C (strain RKS4594).